The sequence spans 197 residues: Ras-related protein RabG2 (197 aa).

GTP is bound by residues 13-20 (GDSAVGKT), 61-65 (DTAGQ), and 119-122 (NKCD). The interval 175–197 (SKPSVVNPGSGGTSNTGGKKKFC) is disordered. Cys-197 carries the S-geranylgeranyl cysteine lipid modification.

This sequence belongs to the small GTPase superfamily. Rab family.

Its subcellular location is the cell membrane. The polypeptide is Ras-related protein RabG2 (rabG2) (Dictyostelium discoideum (Social amoeba)).